The primary structure comprises 203 residues: Protein-methionine-sulfoxide reductase heme-binding subunit MsrQ (203 aa).

6 consecutive transmembrane segments (helical) span residues 10–30 (IFVVGCLFPAWWLYEAAMSLL), 42–62 (LGLGALTFLLVTLCMTPLQKL), 75–95 (LGLWVFAYIVLHILAYLFFIL), 110–130 (PYIIVGALGFLGLLVLAITSN), 147–167 (LVYAVLGLGLLHFLWIVRSDL), and 169–189 (EWSIYALIGAVLMVLRIPAVA).

The protein belongs to the MsrQ family. As to quaternary structure, heterodimer of a catalytic subunit (MsrP) and a heme-binding subunit (MsrQ). The cofactor is FMN. Requires heme b as cofactor.

It localises to the cell inner membrane. Its function is as follows. Part of the MsrPQ system that repairs oxidized periplasmic proteins containing methionine sulfoxide residues (Met-O), using respiratory chain electrons. Thus protects these proteins from oxidative-stress damage caused by reactive species of oxygen and chlorine generated by the host defense mechanisms. MsrPQ is essential for the maintenance of envelope integrity under bleach stress, rescuing a wide series of structurally unrelated periplasmic proteins from methionine oxidation. MsrQ provides electrons for reduction to the reductase catalytic subunit MsrP, using the quinone pool of the respiratory chain. This is Protein-methionine-sulfoxide reductase heme-binding subunit MsrQ from Pseudomonas putida (strain GB-1).